A 217-amino-acid polypeptide reads, in one-letter code: Uracil-DNA glycosylase (217 aa).

Asp-62 serves as the catalytic Proton acceptor.

The protein belongs to the uracil-DNA glycosylase (UDG) superfamily. UNG family.

It is found in the cytoplasm. It catalyses the reaction Hydrolyzes single-stranded DNA or mismatched double-stranded DNA and polynucleotides, releasing free uracil.. Functionally, excises uracil residues from the DNA which can arise as a result of misincorporation of dUMP residues by DNA polymerase or due to deamination of cytosine. This chain is Uracil-DNA glycosylase, found in Streptococcus pneumoniae (strain Hungary19A-6).